Here is a 212-residue protein sequence, read N- to C-terminus: 3-isopropylmalate dehydratase small subunit (212 aa).

This sequence belongs to the LeuD family. LeuD type 1 subfamily. As to quaternary structure, heterodimer of LeuC and LeuD.

The enzyme catalyses (2R,3S)-3-isopropylmalate = (2S)-2-isopropylmalate. Its pathway is amino-acid biosynthesis; L-leucine biosynthesis; L-leucine from 3-methyl-2-oxobutanoate: step 2/4. Its function is as follows. Catalyzes the isomerization between 2-isopropylmalate and 3-isopropylmalate, via the formation of 2-isopropylmaleate. The chain is 3-isopropylmalate dehydratase small subunit from Methylococcus capsulatus (strain ATCC 33009 / NCIMB 11132 / Bath).